Consider the following 147-residue polypeptide: UPF0306 protein YhbP (147 aa).

Belongs to the UPF0306 family.

The protein is UPF0306 protein YhbP of Salmonella arizonae (strain ATCC BAA-731 / CDC346-86 / RSK2980).